The chain runs to 285 residues: Hypersensitive-induced reaction 1 protein (285 aa).

G2 carries N-myristoyl glycine lipidation. The stretch at 118–190 (FEQKNEIAKS…EKILQIKRAE (73 aa)) forms a coiled coil.

In terms of assembly, homo- and heterodimer. Interacts with LRR1 (via LRR domain). As to expression, constitutively expressed in stems, roots and flowers, but not in leaves and fruits.

In terms of biological role, positive regulator of hypersensitive response (HR)-like cell death. May be involved in potassium ion channel regulation. The chain is Hypersensitive-induced reaction 1 protein from Capsicum annuum (Capsicum pepper).